The following is a 157-amino-acid chain: Transcriptional repressor NrdR (157 aa).

The disordered stretch occupies residues 1 to 21 (MRCPYCSSEDSQVKDSRPAED). The segment at 3–34 (CPYCSSEDSQVKDSRPAEDGNAIRRRRICPDC) is a zinc-finger region. The span at 11 to 21 (SQVKDSRPAED) shows a compositional bias: basic and acidic residues. An ATP-cone domain is found at 49-139 (LMIIKKTGRK…VYRDFSHAED (91 aa)).

It belongs to the NrdR family. It depends on Zn(2+) as a cofactor.

Functionally, negatively regulates transcription of bacterial ribonucleotide reductase nrd genes and operons by binding to NrdR-boxes. The protein is Transcriptional repressor NrdR of Sinorhizobium fredii (strain NBRC 101917 / NGR234).